Consider the following 331-residue polypeptide: Septin homolog spn2 (331 aa).

The 273-residue stretch at 29–301 (RGFQFNVMVV…EKFRFKQLSS (273 aa)) folds into the Septin-type G domain. Residues 39-46 (GPSGSGKS) form a G1 motif region. Residues 39–46 (GPSGSGKS), threonine 73, glycine 99, 179–187 (KSDSLTLEE), glycine 235, and arginine 250 each bind GTP. Residues 96 to 99 (DTPG) form a G3 motif region. The tract at residues 178–181 (AKSD) is G4 motif. The tract at residues 311 to 331 (RMGSPAPVYPSEPHLHTATAQ) is disordered.

This sequence belongs to the TRAFAC class TrmE-Era-EngA-EngB-Septin-like GTPase superfamily. Septin GTPase family. As to quaternary structure, component of the septin complex composed of two copies of each spn1, spn2, spn3 and spn4. Component of the sporulation-specific septin complex composed of at least spn2, spn5, spn6 and spn7.

It is found in the cytoplasm. It localises to the cell cortex. Its subcellular location is the forespore membrane. In terms of biological role, plays a role in the cell cycle. Involved in a late stage of septum formation leading to the separation of the daughter cells. Involved in the correct orientation of forespore membrane extension during sporulation. Binds phosphatidylinositol 4-phosphate. The chain is Septin homolog spn2 (spn2) from Schizosaccharomyces pombe (strain 972 / ATCC 24843) (Fission yeast).